We begin with the raw amino-acid sequence, 570 residues long: Glycine--tRNA ligase (570 aa).

Substrate-binding residues include Arg99 and Glu165. ATP-binding positions include Arg197–Glu199, Leu207–Phe212, Glu324–Cys325, and Gly443–Arg446. Phe212 to Glu216 is a binding site for substrate. Substrate is bound at residue Glu439–Gly443.

The protein belongs to the class-II aminoacyl-tRNA synthetase family.

It is found in the cytoplasm. It catalyses the reaction tRNA(Gly) + glycine + ATP = glycyl-tRNA(Gly) + AMP + diphosphate. Catalyzes the attachment of glycine to tRNA(Gly). The sequence is that of Glycine--tRNA ligase from Thermococcus sibiricus (strain DSM 12597 / MM 739).